The chain runs to 247 residues: Ribonuclease 3 (247 aa).

Positions 21 to 149 (FKKLSKKIGI…LVGAIYLDRG (129 aa)) constitute an RNase III domain. Glu62 provides a ligand contact to Mg(2+). Residue Asp66 is part of the active site. Mg(2+) is bound by residues Asn135 and Glu138. Glu138 is an active-site residue. The 70-residue stretch at 176 to 245 (DYKTQLQEYS…AKELYIRIRR (70 aa)) folds into the DRBM domain.

Belongs to the ribonuclease III family. Homodimer. Mg(2+) is required as a cofactor.

The protein resides in the cytoplasm. The catalysed reaction is Endonucleolytic cleavage to 5'-phosphomonoester.. Its function is as follows. Digests double-stranded RNA. Involved in the processing of primary rRNA transcript to yield the immediate precursors to the large and small rRNAs (23S and 16S). Processes some mRNAs, and tRNAs when they are encoded in the rRNA operon. Processes pre-crRNA and tracrRNA of type II CRISPR loci if present in the organism. The polypeptide is Ribonuclease 3 (Leptospira borgpetersenii serovar Hardjo-bovis (strain L550)).